Reading from the N-terminus, the 257-residue chain is MQYQVDLNSDIGESYGAYTIGQDDEVMEFITSANIACGYHAGDHNIIHRTIDLAIKNNVAIGAHPGLQDLIGFGRRPMQISPEEVYQLTVYQIGAVQAFAQVKGHNLYHVKPHGALYNMAAKDTAIAKAIAQAVYDYNPNLILFGLANSELIRMGKEVGLNVANEVFADRTYQPDGSLTPRTSPNAMIHDTDEAVERVIRMVKENKIEAVDGTDISIIADTICIHGDGPKSLEFSRRLSHELKNQGISIQKREMHHG.

It belongs to the LamB/PxpA family. As to quaternary structure, forms a complex composed of PxpA, PxpB and PxpC.

The catalysed reaction is 5-oxo-L-proline + ATP + 2 H2O = L-glutamate + ADP + phosphate + H(+). Its function is as follows. Catalyzes the cleavage of 5-oxoproline to form L-glutamate coupled to the hydrolysis of ATP to ADP and inorganic phosphate. This Oceanobacillus iheyensis (strain DSM 14371 / CIP 107618 / JCM 11309 / KCTC 3954 / HTE831) protein is 5-oxoprolinase subunit A.